Consider the following 360-residue polypeptide: Secreted LysM effector LysM2 (360 aa).

A signal peptide spans Met-1–Gly-21. A LysM 1 domain is found at Thr-37–Val-85. Residues Ala-94–Ala-113 are compositionally biased toward low complexity. The interval Ala-94–Gly-125 is disordered. Residue Asn-129 is glycosylated (N-linked (GlcNAc...) asparagine). The LysM 2 domain occupies Lys-132–Val-179. An N-linked (GlcNAc...) asparagine glycan is attached at Asn-204. LysM domains lie at Arg-225 to Ile-272 and Lys-311 to Val-357.

Belongs to the secreted LysM effector family.

It is found in the secreted. The protein resides in the cell wall. In terms of biological role, secreted effector that binds two substrates, chitin and N-linked oligosaccharides associated with human skin glycoproteins. Could provide the pathogen with three important functions including shielding host cell wall chitin from the human immune system, shielding the pathogen's glycoproteins from host degradation and immune surveillance, and helping facilitate pathogen adhesion to human skin. The chain is Secreted LysM effector LysM2 from Trichophyton rubrum (strain ATCC MYA-4607 / CBS 118892) (Athlete's foot fungus).